A 473-amino-acid polypeptide reads, in one-letter code: Lipid A galacturonosyltransferase RgtD (473 aa).

10 helical membrane-spanning segments follow: residues 6 to 26 (GLLI…FDAT), 68 to 88 (AIYW…LVLM), 94 to 114 (FVGP…PGVA), 118 to 138 (VFFS…LAYF), 160 to 180 (FLTK…LLLI), 190 to 210 (VIIA…WNLQ), 238 to 258 (FFAA…LWAV), 271 to 291 (KMLV…ATVA), 295 to 315 (ANWA…LLYL), and 327 to 347 (INGI…QLLL).

It is found in the cell membrane. Its pathway is bacterial outer membrane biogenesis; LPS lipid A biosynthesis. Involved in the modification of the lipopolysaccharide (LPS) lipid A moiety. Catalyzes the transfer of a galacturonic acid (GalA) residue to the 4'-position of 4'-dephosphorylated lipid A, using dodecaprenyl phosphate-GalA as the donor substrate. Acts before the other GalA transferases RgtA, RgtB and RgtC. The protein is Lipid A galacturonosyltransferase RgtD of Rhizobium johnstonii (strain DSM 114642 / LMG 32736 / 3841) (Rhizobium leguminosarum bv. viciae).